The sequence spans 644 residues: MKYILVTGGVISGVGKGVIASSFGTLLKSCQLDVTSIKIDPYINIDAGTFSPYEHGEVYVLDDGAEVDLDLGNYERFLDITLHRDNNITTGKIYKLVIEKERTGEYLGKTVQVVPHITDAIQEWVERVAQTPVQGSSKPQVCIIELGGTIGDIEGMPFVEAFRQFQFRVKRENFCVAHVSLVPLPKATGEPKTKPTQSSVRELRGCGLSPDLIVCRSEKPIGLEVKEKISNFCHVGPDQVICIHDLNSIYHVPLLMEQNGVIEYLNERLQLNIDMSKRTKCLQHWRDLARRTETVRREVSIAIVGKYTKFADSYASVVKALQHAALAANRKLVLVFIESCQLEQETLVSEPSKYHKEWQRLCDSDGILVPGGFGSRGMEGKIRACRWARENQKPMLGICLGLQAAVIEFARNKLGLKDANTTEIDPQTGNALVIDMPEHHTGQLGGTMRLGKRTTVFSEGCTSIIRQLYGNPKSIEERHRHRYEVNPKYVPQLEEHGMRFVATDVDKTRMEIIELRDHPYFVATQYHPEYLSRPLKPSPPFLGLILASVDRLPQYIQRGCRLSPRQLSDASSDEEETYVGATKLMKSLQITGTTTPTNGISRNACRSSNSSTISTVSSDIEGACGGVGVGPTTTNGHGEDIGKE.

The 252-residue stretch at 300–551 (SIAIVGKYTK…LGLILASVDR (252 aa)) folds into the Glutamine amidotransferase type-1 domain. Active-site for GATase activity residues include C399, H527, and E529.

This sequence belongs to the CTP synthase family.

The catalysed reaction is UTP + L-glutamine + ATP + H2O = CTP + L-glutamate + ADP + phosphate + 2 H(+). The protein operates within pyrimidine metabolism; CTP biosynthesis via de novo pathway; CTP from UDP: step 2/2. Functionally, catalyzes the ATP-dependent amination of UTP to CTP with either L-glutamine or ammonia as the source of nitrogen. Constitutes the rate-limiting enzyme in the synthesis of cytosine nucleotides. The sequence is that of CTP synthase from Drosophila pseudoobscura pseudoobscura (Fruit fly).